A 261-amino-acid chain; its full sequence is uncharacterized protein (261 aa).

Residues Asp43, His45, Asp75, Asn106, His197, and His199 each contribute to the a divalent metal cation site.

Belongs to the metallophosphoesterase superfamily. The cofactor is a divalent metal cation.

This is an uncharacterized protein from Aquifex aeolicus (strain VF5).